Here is a 549-residue protein sequence, read N- to C-terminus: mRNA-capping enzyme subunit beta (549 aa).

Residue serine 2 is modified to N-acetylserine. At serine 15 the chain carries Phosphoserine. Residues 30–169 (LQKLSEAANG…QGNEGNIASN (140 aa)) are disordered. Over residues 86 to 96 (DDEETDTDDEM) the composition is skewed to acidic residues. At serine 124 the chain carries Phosphoserine. Positions 135-157 (AKLEKPSDDSIHQNSKSDEEQRI) are enriched in basic and acidic residues. The active-site N6-GMP-lysine intermediate is lysine 223.

Belongs to the fungal TPase family. Heterodimer. The mRNA-capping enzyme is composed of two separate chains alpha and beta, respectively a mRNA guanylyltransferase and an mRNA 5'-triphosphate monophosphatase. The cofactor is Mg(2+).

Its subcellular location is the nucleus. The enzyme catalyses a 5'-end triphospho-ribonucleoside in mRNA + H2O = a 5'-end diphospho-ribonucleoside in mRNA + phosphate + H(+). In terms of biological role, first step of mRNA capping. Converts the 5'-triphosphate end of a nascent mRNA chain into a diphosphate end. This is mRNA-capping enzyme subunit beta (CET1) from Saccharomyces cerevisiae (strain ATCC 204508 / S288c) (Baker's yeast).